The primary structure comprises 510 residues: Maturase K (510 aa).

It belongs to the intron maturase 2 family. MatK subfamily.

The protein resides in the plastid. Its subcellular location is the chloroplast. Its function is as follows. Usually encoded in the trnK tRNA gene intron. Probably assists in splicing its own and other chloroplast group II introns. The protein is Maturase K of Populus trichocarpa (Western balsam poplar).